A 404-amino-acid chain; its full sequence is Argininosuccinate synthase (404 aa).

ATP contacts are provided by residues 11–19 (AYSGGLDTS) and Ala-38. Residues Tyr-91 and Ser-96 each coordinate L-citrulline. ATP is bound at residue Gly-121. Positions 123, 127, and 128 each coordinate L-aspartate. An L-citrulline-binding site is contributed by Asn-127. Residues Arg-131, Ser-182, Ser-191, Glu-267, and Tyr-279 each coordinate L-citrulline.

It belongs to the argininosuccinate synthase family. Type 1 subfamily. As to quaternary structure, homotetramer.

The protein resides in the cytoplasm. The enzyme catalyses L-citrulline + L-aspartate + ATP = 2-(N(omega)-L-arginino)succinate + AMP + diphosphate + H(+). It participates in amino-acid biosynthesis; L-arginine biosynthesis; L-arginine from L-ornithine and carbamoyl phosphate: step 2/3. In Paramagnetospirillum magneticum (strain ATCC 700264 / AMB-1) (Magnetospirillum magneticum), this protein is Argininosuccinate synthase.